The primary structure comprises 593 residues: MLO-like protein 8 (593 aa).

At Met-1–Thr-46 the chain is on the extracellular side. Residues Trp-47–Leu-67 traverse the membrane as a helical segment. Residues His-68 to Glu-92 are Cytoplasmic-facing. Residues Leu-93–Ile-113 traverse the membrane as a helical segment. The Extracellular portion of the chain corresponds to Cys-114 to His-181. Residues Ile-182–Gly-202 form a helical membrane-spanning segment. Residues Arg-203 to Lys-304 are Cytoplasmic-facing. The chain crosses the membrane as a helical span at residues Val-305–Ile-325. Position 326 (Asp-326) is a topological domain, extracellular. The chain crosses the membrane as a helical span at residues Gly-327–Thr-347. At Lys-348–His-393 the chain is on the cytoplasmic side. A helical membrane pass occupies residues Phe-394–Gly-414. Residues Ser-415–Val-430 are Extracellular-facing. The helical transmembrane segment at Ala-431–Val-451 threads the bilayer. The Cytoplasmic portion of the chain corresponds to Thr-452–Arg-593. A calmodulin-binding region spans residues Glu-465–Ala-486. Residues Lys-481 to Arg-593 are disordered. Low complexity predominate over residues Lys-489–Ser-512. Residues Leu-528–Asn-539 show a composition bias toward acidic residues. Residues Thr-567–Ser-579 are compositionally biased toward basic and acidic residues.

Belongs to the MLO family.

It is found in the membrane. Its function is as follows. May be involved in modulation of pathogen defense and leaf cell death. Activity seems to be regulated by Ca(2+)-dependent calmodulin binding and seems not to require heterotrimeric G proteins. The polypeptide is MLO-like protein 8 (MLO8) (Arabidopsis thaliana (Mouse-ear cress)).